We begin with the raw amino-acid sequence, 71 residues long: Small ribosomal subunit protein bS21 (71 aa).

The disordered stretch occupies residues 48–71 (ENATLAKRHAKRNARENARNTRLY). Residues 60-71 (NARENARNTRLY) show a composition bias toward basic and acidic residues.

It belongs to the bacterial ribosomal protein bS21 family.

This is Small ribosomal subunit protein bS21 from Haemophilus influenzae (strain 86-028NP).